A 653-amino-acid polypeptide reads, in one-letter code: UvrABC system protein B (653 aa).

Residues 25–182 (EGIERGVREQ…EKLVELQYKS (158 aa)) enclose the Helicase ATP-binding domain. 38 to 45 (GVTGSGKT) contributes to the ATP binding site. Positions 91-114 (YYDYYQPEAYIPHSDVYIEKDALI) match the Beta-hairpin motif. The Helicase C-terminal domain maps to 429–591 (QIADVVNESQ…ITPKSISKSV (163 aa)). Residues 616 to 651 (EEDIIKLQKEMLLHAENLEFEKALEIRNQINKLSQH) form the UVR domain.

Belongs to the UvrB family. In terms of assembly, forms a heterotetramer with UvrA during the search for lesions. Interacts with UvrC in an incision complex.

It localises to the cytoplasm. The UvrABC repair system catalyzes the recognition and processing of DNA lesions. A damage recognition complex composed of 2 UvrA and 2 UvrB subunits scans DNA for abnormalities. Upon binding of the UvrA(2)B(2) complex to a putative damaged site, the DNA wraps around one UvrB monomer. DNA wrap is dependent on ATP binding by UvrB and probably causes local melting of the DNA helix, facilitating insertion of UvrB beta-hairpin between the DNA strands. Then UvrB probes one DNA strand for the presence of a lesion. If a lesion is found the UvrA subunits dissociate and the UvrB-DNA preincision complex is formed. This complex is subsequently bound by UvrC and the second UvrB is released. If no lesion is found, the DNA wraps around the other UvrB subunit that will check the other stand for damage. The polypeptide is UvrABC system protein B (Anaplasma phagocytophilum (strain HZ)).